The following is a 258-amino-acid chain: UPF0328 protein ECU02_0090 (258 aa).

Belongs to the UPF0328 family.

The protein is UPF0328 protein ECU02_0090 of Encephalitozoon cuniculi (strain GB-M1) (Microsporidian parasite).